The following is a 552-amino-acid chain: Phosphoglucomutase (552 aa).

The active-site Phosphoserine intermediate is Ser-143. Residues Ser-143, Asp-295, Asp-297, and Asp-299 each coordinate Mg(2+).

It belongs to the phosphohexose mutase family. It depends on Mg(2+) as a cofactor.

It catalyses the reaction alpha-D-glucose 1-phosphate = alpha-D-glucose 6-phosphate. Its pathway is glycolipid metabolism; diglucosyl-diacylglycerol biosynthesis. In terms of biological role, catalyzes the interconversion between glucose-6-phosphate and alpha-glucose-1-phosphate. This is the first step in the biosynthesis of diglucosyl-diacylglycerol (Glc2-DAG), i.e. the predominant glycolipid found in the S.aureus membrane, which is also used as a membrane anchor for lipoteichoic acid (LTA). The protein is Phosphoglucomutase (pgcA) of Staphylococcus aureus (strain USA300).